Here is a 37-residue protein sequence, read N- to C-terminus: Calcitonin gene-related peptide 1 (37 aa).

C2 and C7 are joined by a disulfide. At F37 the chain carries Phenylalanine amide.

Belongs to the calcitonin family.

The protein resides in the secreted. Functionally, CGRP1/CALCA is a peptide hormone that induces vasodilation mediated by the CALCRL-RAMP1 receptor complex. Dilates a variety of vessels including the coronary, cerebral and systemic vasculature. Its abundance in the CNS also points toward a neurotransmitter or neuromodulator role. It also elevates platelet cAMP. CGRP1 can also bind and activate CALCR-RAMP1 (AMYR1) receptor complex. In Ovis aries (Sheep), this protein is Calcitonin gene-related peptide 1 (CALCA).